A 375-amino-acid chain; its full sequence is tRNA-specific 2-thiouridylase MnmA 3 (375 aa).

Residues 11–18 and M37 each bind ATP; that span reads GMSGGIDS. The Nucleophile role is filled by C104. The cysteines at positions 104 and 201 are disulfide-linked. G128 provides a ligand contact to ATP. Residues 150–152 are interaction with tRNA; that stretch reads KDQ. The active-site Cysteine persulfide intermediate is C201. An interaction with tRNA region spans residues 309-310; that stretch reads RY.

It belongs to the MnmA/TRMU family.

It localises to the cytoplasm. It carries out the reaction S-sulfanyl-L-cysteinyl-[protein] + uridine(34) in tRNA + AH2 + ATP = 2-thiouridine(34) in tRNA + L-cysteinyl-[protein] + A + AMP + diphosphate + H(+). Functionally, catalyzes the 2-thiolation of uridine at the wobble position (U34) of tRNA, leading to the formation of s(2)U34. This chain is tRNA-specific 2-thiouridylase MnmA 3, found in Phocaeicola vulgatus (strain ATCC 8482 / DSM 1447 / JCM 5826 / CCUG 4940 / NBRC 14291 / NCTC 11154) (Bacteroides vulgatus).